The sequence spans 545 residues: MAAKEVKFSDDARTRMLRGVNILAHAVKVTLGPKGRNVVLEKSFGAPTVTKDGVSVAKEIELSDKFENMGAQMVKEVASQTSDVAGDGTTTATVLAQSILTEGLKAVAAGMNPMDLKRGIDKAVAAAVDEIHAMSVPCTDSNAIAQVGTISANADESIGKIIAEAMDKVGKEGVITVEDGSGLENQLDIVEGMQFDRGYLSPYFINNQQSMSAELENPFILINEKKISNIRELLPVLEGVAKAGRPLVIVAEDVEGEALATLVVNNMRGILKVAAVKAPGFGDRRKAMLEDIAVLTGGTVISEDIGLSLEKATLADLGTAKKVQITKENTTIIDGAGSSEAIQGRVAQIRKQIEDTTSDYDREKLQERLAKLAGGVAVIKVGAATEVEMKEKKARVEDALHATRAAVEEGIVPGGGVALIRALAKLRDLKGANHDQDVGISIARRAMEEPLRQIVANAGDEPSVVLNKVAEGAGNFGYNAATGEYGDMVAMGILDPAKVTRSALQNAASVASLMITTEAMVAEEPKEEAPMPGGMGGMGGMGDMM.

Residues 30-33, Lys51, 87-91, Gly415, 479-481, and Asp495 contribute to the ATP site; these read TLGP, DGTTT, and NAA.

Belongs to the chaperonin (HSP60) family. Forms a cylinder of 14 subunits composed of two heptameric rings stacked back-to-back. Interacts with the co-chaperonin GroES.

It is found in the cytoplasm. It carries out the reaction ATP + H2O + a folded polypeptide = ADP + phosphate + an unfolded polypeptide.. Together with its co-chaperonin GroES, plays an essential role in assisting protein folding. The GroEL-GroES system forms a nano-cage that allows encapsulation of the non-native substrate proteins and provides a physical environment optimized to promote and accelerate protein folding. This is Chaperonin GroEL 1 from Methylococcus capsulatus (strain ATCC 33009 / NCIMB 11132 / Bath).